The following is a 209-amino-acid chain: uncharacterized protein (209 aa).

The disordered stretch occupies residues aspartate 177–glycine 209. Residues serine 183–asparagine 202 show a composition bias toward acidic residues.

This is an uncharacterized protein from Acanthamoeba polyphaga (Amoeba).